Reading from the N-terminus, the 446-residue chain is MHRIFLITVALALLTASPASAITPPPIDPGALPPDVTGPDQPTEQRVLCASPTTLPGSGFHDPPWSNTYLGVADAHKFATGAGVTVAVIDTGVDASPRVPAEPGGDFVDQAGNGLSDCDAHGTLTASIIAGRPAPTDGFVGVAPDARLLSLRQTSEAFEPVGSQANPNDPNATPAAGSIRSLARAVVHAANLGVGVINISEAACYKVSRPIDETSLGASIDYAVNVKGVVVVVAAGNTGGDCVQNPAPDPSTPGDPRGWNNVQTVVTPAWYAPLVLSVGGIGQTGMPSSFSMHGPWVDVAAPAENIVALGDTGEPVNALQGREGPVPIAGTSFAAAYVSGLAALLRQRFPDLTPAQIIHRITATARHPGGGVDDLVGAGVIDAVAALTWDIPPGPASAPYNVRRLPPPVVEPGPDRRPITAVALVAVGLTLALGLGALARRALSRR.

The signal sequence occupies residues 1–21; the sequence is MHRIFLITVALALLTASPASA. Residues 24–43 are disordered; sequence PPPIDPGALPPDVTGPDQPT. The region spanning 64 to 387 is the Peptidase S8 domain; that stretch reads PWSNTYLGVA…AGVIDAVAAL (324 aa). Active-site charge relay system residues include Asp-90, His-121, and Ser-332. The helical transmembrane segment at 419 to 439 threads the bilayer; sequence ITAVALVAVGLTLALGLGALA.

This sequence belongs to the peptidase S8 family.

It localises to the cell membrane. Functionally, may play a dual role in regulation of ESX-1 secretion and virulence. Acts as a protease that cleaves EspB. Essential for ESX-1 function, required for early replication in macrophages and full virulence in mice. In Mycobacterium tuberculosis (strain ATCC 25618 / H37Rv), this protein is Mycosin-1.